Consider the following 438-residue polypeptide: Proline--tRNA ligase (438 aa).

This sequence belongs to the class-II aminoacyl-tRNA synthetase family. ProS type 2 subfamily. Homodimer.

The protein localises to the cytoplasm. The enzyme catalyses tRNA(Pro) + L-proline + ATP = L-prolyl-tRNA(Pro) + AMP + diphosphate. Catalyzes the attachment of proline to tRNA(Pro) in a two-step reaction: proline is first activated by ATP to form Pro-AMP and then transferred to the acceptor end of tRNA(Pro). This is Proline--tRNA ligase from Gluconobacter oxydans (strain 621H) (Gluconobacter suboxydans).